Reading from the N-terminus, the 384-residue chain is S-adenosylmethionine synthase (384 aa).

His-15 is an ATP binding site. Position 17 (Asp-17) interacts with Mg(2+). Glu-43 serves as a coordination point for K(+). The L-methionine site is built by Glu-56 and Gln-99. The interval 99-109 (QSPDINQGVDK) is flexible loop. ATP-binding positions include 164 to 166 (DAK), 230 to 231 (RF), Asp-239, 245 to 246 (RK), Ala-262, and Lys-266. Asp-239 lines the L-methionine pocket. Position 270 (Lys-270) interacts with L-methionine.

It belongs to the AdoMet synthase family. In terms of assembly, homotetramer; dimer of dimers. Mg(2+) serves as cofactor. The cofactor is K(+).

The protein resides in the cytoplasm. It carries out the reaction L-methionine + ATP + H2O = S-adenosyl-L-methionine + phosphate + diphosphate. The protein operates within amino-acid biosynthesis; S-adenosyl-L-methionine biosynthesis; S-adenosyl-L-methionine from L-methionine: step 1/1. Its function is as follows. Catalyzes the formation of S-adenosylmethionine (AdoMet) from methionine and ATP. The overall synthetic reaction is composed of two sequential steps, AdoMet formation and the subsequent tripolyphosphate hydrolysis which occurs prior to release of AdoMet from the enzyme. The polypeptide is S-adenosylmethionine synthase (Vibrio parahaemolyticus serotype O3:K6 (strain RIMD 2210633)).